The following is a 506-amino-acid chain: Zinc finger and SCAN domain containing protein 4C (506 aa).

The tract at residues 1 to 24 (MASQQAPAKDLQTNNLEFTPTDSS) is disordered. The SCAN box domain occupies 37–119 (SAQLNFSPSN…RFMESLTDEC (83 aa)). 4 C2H2-type zinc fingers span residues 395–417 (YKCE…QRTH), 424–446 (LLCV…EIIH), 452–474 (FKCS…EMIH), and 480–503 (YVCS…RNYH).

In terms of tissue distribution, embryonic stem (ES) cell-specific. Expressed in only 5% of ES cells at a given time, but nearly all ES cells express it at least once during 9 passages.

The protein localises to the nucleus. It is found in the chromosome. It localises to the telomere. Functionally, embryonic stem (ES) cell-specific transcription factor required to regulate ES cell pluripotency. Binds telomeres and plays a key role in genomic stability in ES cells by regulating telomere elongation. Acts as an activator of spontaneous telomere sister chromatid exchange (T-SCE) and telomere elongation in undifferentiated ES cells. This is Zinc finger and SCAN domain containing protein 4C (Zscan4c) from Mus musculus (Mouse).